The primary structure comprises 625 residues: 1,4-alpha-glucan branching enzyme GlgB (625 aa).

D302 functions as the Nucleophile in the catalytic mechanism. E355 acts as the Proton donor in catalysis.

Belongs to the glycosyl hydrolase 13 family. GlgB subfamily. In terms of assembly, monomer.

The catalysed reaction is Transfers a segment of a (1-&gt;4)-alpha-D-glucan chain to a primary hydroxy group in a similar glucan chain.. It participates in glycan biosynthesis; glycogen biosynthesis. Its function is as follows. Catalyzes the formation of the alpha-1,6-glucosidic linkages in glycogen by scission of a 1,4-alpha-linked oligosaccharide from growing alpha-1,4-glucan chains and the subsequent attachment of the oligosaccharide to the alpha-1,6 position. The protein is 1,4-alpha-glucan branching enzyme GlgB of Albidiferax ferrireducens (strain ATCC BAA-621 / DSM 15236 / T118) (Rhodoferax ferrireducens).